We begin with the raw amino-acid sequence, 201 residues long: Superoxide dismutase [Mn/Fe] (201 aa).

His27, His75, Asp161, and His165 together coordinate Fe(3+). Residues His27, His75, Asp161, and His165 each contribute to the Mn(2+) site.

It belongs to the iron/manganese superoxide dismutase family. Homotetramer. Mn(2+) serves as cofactor. The cofactor is Fe(3+).

The enzyme catalyses 2 superoxide + 2 H(+) = H2O2 + O2. Its activity is regulated as follows. Shows decreasing activity with increasing pH. Slightly inhibited by azide and fluoride at pH 7-8; the inhibition is drastically increased towards lower pH. Its function is as follows. Destroys superoxide anion radicals which are normally produced within the cells and which are toxic to biological systems. Catalyzes the dismutation of superoxide anion radicals into O2 and H2O2 by successive reduction and oxidation of the transition metal ion at the active site. The sequence is that of Superoxide dismutase [Mn/Fe] (sodA) from Propionibacterium freudenreichii subsp. shermanii.